The following is an 834-amino-acid chain: Translation factor GUF1 homolog, mitochondrial (834 aa).

The transit peptide at 1 to 66 directs the protein to the mitochondrion; it reads MKLCGVRSSG…RPLLAEPRRY (66 aa). Positions 129–314 constitute a tr-type G domain; the sequence is ACIRNVSVVA…HIIDKVPPPC (186 aa). Residues 138-145, 205-209, and 259-262 contribute to the GTP site; these read AHVDHGKT, DTPGH, and TKMD. 2 disordered regions span residues 363–385 and 476–507; these read GAAS…ASGG and TGSP…SSSV. Residues 488-507 are compositionally biased toward low complexity; that stretch reads ATAAETASSDDASGSGSSSV.

It belongs to the TRAFAC class translation factor GTPase superfamily. Classic translation factor GTPase family. LepA subfamily.

It localises to the mitochondrion inner membrane. It carries out the reaction GTP + H2O = GDP + phosphate + H(+). Its function is as follows. Promotes mitochondrial protein synthesis. May act as a fidelity factor of the translation reaction, by catalyzing a one-codon backward translocation of tRNAs on improperly translocated ribosomes. Binds to mitochondrial ribosomes in a GTP-dependent manner. This chain is Translation factor GUF1 homolog, mitochondrial, found in Leishmania infantum.